Consider the following 294-residue polypeptide: Retinoic acid receptor responder protein 1 (294 aa).

The Lumenal portion of the chain corresponds to 1 to 20 (MQPRRQRLPAPWSGPRGPRP). The chain crosses the membrane as a helical; Signal-anchor for type III membrane protein span at residues 21–42 (TAPLLALLLLLAPVAAPAGSGD). Cystatin LXN-type domains lie at 38-153 (AGSG…EKKK) and 173-276 (EIVS…TPEE). Residue S40 is glycosylated (O-linked (Xyl...) (chondroitin sulfate) serine). Over 43 to 294 (PDDPGQPQDA…AVVPTELSNF (252 aa)) the chain is Cytoplasmic. Residues 273-294 (TPEEASGTEEGSAVVPTELSNF) are disordered.

Belongs to the protease inhibitor I47 (latexin) family. As to quaternary structure, interacts with AGBL2, KIF11 and MAPRE1. Post-translationally, not N-glycosylated. O-glycosylated; contains chondroitin sulfate. As to expression, detected in urine (at protein level).

The protein localises to the membrane. It localises to the secreted. Its function is as follows. Inhibitor of the cytoplasmic carboxypeptidase AGBL2, may regulate the alpha-tubulin tyrosination cycle. This Homo sapiens (Human) protein is Retinoic acid receptor responder protein 1 (RARRES1).